The primary structure comprises 444 residues: Coagulation factor VII (444 aa).

Positions 1–21 (MAPQARGLGLCSLLALQASLA) are cleaved as a signal peptide. Positions 22–39 (AVFITQEEAHSVLRRQRR) are excised as a propeptide. One can recognise a Gla domain in the interval 40 to 84 (ANSFLEELRPGSLERECKEELCSFEEAREVFQSTERTKQFWITYN). Glu45, Glu46, Glu53, Glu55, Glu58, Glu59, Glu64, Glu65, Glu68, and Glu74 each carry 4-carboxyglutamate. An intrachain disulfide couples Cys56 to Cys61. The EGF-like 1; calcium-binding domain maps to 85–121 (DGDQCASNPCQNGGSCEDQIQSYICFCLADFEGRNCE). 9 cysteine pairs are disulfide-bonded: Cys89/Cys100, Cys94/Cys109, Cys111/Cys120, Cys130/Cys141, Cys137/Cys151, Cys153/Cys166, Cys174/Cys301, Cys198/Cys203, and Cys217/Cys233. An O-linked (Glc...) serine; alternate glycan is attached at Ser91. Ser91 is a glycosylation site (O-linked (Xyl...) serine; alternate). Ser99 carries an O-linked (Fuc) serine glycan. The residue at position 102 (Asp102) is a (3R)-3-hydroxyaspartate. Residues 126-167 (DQLICMYENGGCEQYCSDHVGSQRSCRCHEGYTLLPNGVSCT) form the EGF-like 2 domain. The region spanning 192 to 431 (IVGGKVCPKG…YTEWLSRLMR (240 aa)) is the Peptidase S1 domain. The N-linked (GlcNAc...) asparagine glycan is linked to Asn211. Catalysis depends on His232, which acts as the Charge relay system. N-linked (GlcNAc...) asparagine glycosylation is present at Asn242. Asp281 serves as the catalytic Charge relay system. N-linked (GlcNAc...) asparagine glycosylation is present at Asn306. Cys349 and Cys368 form a disulfide bridge. Asp377 provides a ligand contact to substrate. A disulfide bond links Cys379 and Cys407. The active-site Charge relay system is Ser383.

The protein belongs to the peptidase S1 family. Heterodimer of a light chain and a heavy chain linked by a disulfide bond. In terms of processing, the vitamin K-dependent, enzymatic carboxylation of some glutamate residues allows the modified protein to bind calcium. Post-translationally, the iron and 2-oxoglutarate dependent 3-hydroxylation of aspartate and asparagine is (R) stereospecific within EGF domains. O-glycosylated. O-fucosylated by POFUT1 on a conserved serine or threonine residue found in the consensus sequence C2-X(4,5)-[S/T]-C3 of EGF domains, where C2 and C3 are the second and third conserved cysteines. In terms of processing, can be either O-glucosylated or O-xylosylated at Ser-91 by POGLUT1. As to expression, plasma.

The protein localises to the secreted. It catalyses the reaction Selective cleavage of Arg-|-Ile bond in factor X to form factor Xa.. Initiates the extrinsic pathway of blood coagulation. Serine protease that circulates in the blood in a zymogen form. Factor VII is converted to factor VIIa by factor Xa, factor XIIa, factor IXa, or thrombin by minor proteolysis. In the presence of tissue factor and calcium ions, factor VIIa then converts factor X to factor Xa by limited proteolysis. Factor VIIa also converts factor IX to factor IXa in the presence of tissue factor and calcium. This chain is Coagulation factor VII (F7), found in Oryctolagus cuniculus (Rabbit).